The following is a 434-amino-acid chain: MREEGSELEMEKGFLKWKPVNLMKKILSLPMKKTKNDIGLRLDISYILVNLIVCSYPVNTYPKLLYRNSLDDLILFLTVYHGKGNFRIFNFRGEKEDSDYKDNDLIGIAAKFESKDFEIQELRSTLINDGKIPISPIDLETRTLVEEETNNVICERIGWLDHFPPPFELLEEIVDGIENYLSVSKNRVAVLHCRMGKGRSGMITVAYLMKYLQCPLGEARLIFMQARFKYGMTNGVTIPSQLRYLRYHEFFITHEKAAQEGISNEAVKFKFKFRLAKMTFLRPSSLITSESAIVTTKIQHYNDDRNALLTRKVVYSDIMAHECGGNMTFIFGRDYLTLENDCRIEFTLGTSKSKAASSIISWTSCASCWLNIYLETLMHIIKDDSSPDYFQVERLKRDEMLGTTISWQELDGFGELSTHGLKLFQALKLEWEII.

One can recognise a Phosphatase tensin-type domain in the interval 33 to 255; that stretch reads KTKNDIGLRL…RYHEFFITHE (223 aa). The active-site Phosphocysteine intermediate is the Cys193.

The catalysed reaction is a 1,2-diacyl-sn-glycero-3-phospho-(1D-myo-inositol-3,4,5-trisphosphate) + H2O = a 1,2-diacyl-sn-glycero-3-phospho-(1D-myo-inositol-4,5-bisphosphate) + phosphate. In terms of biological role, may act as a phosphoinositide 3-phosphatase by regulating PtdIns(3,4,5)P3 levels. This Saccharomyces cerevisiae (strain ATCC 204508 / S288c) (Baker's yeast) protein is Probable phosphatidylinositol 3,4,5-trisphosphate 3-phosphatase TEP1 (TEP1).